A 194-amino-acid polypeptide reads, in one-letter code: Imidazoleglycerol-phosphate dehydratase (194 aa).

Belongs to the imidazoleglycerol-phosphate dehydratase family.

It is found in the cytoplasm. It carries out the reaction D-erythro-1-(imidazol-4-yl)glycerol 3-phosphate = 3-(imidazol-4-yl)-2-oxopropyl phosphate + H2O. It participates in amino-acid biosynthesis; L-histidine biosynthesis; L-histidine from 5-phospho-alpha-D-ribose 1-diphosphate: step 6/9. This Chlorobaculum parvum (strain DSM 263 / NCIMB 8327) (Chlorobium vibrioforme subsp. thiosulfatophilum) protein is Imidazoleglycerol-phosphate dehydratase.